Consider the following 376-residue polypeptide: N-acetyldiaminopimelate deacetylase (376 aa).

D69 is a catalytic residue. The active-site Proton acceptor is the E128.

Belongs to the peptidase M20A family. N-acetyldiaminopimelate deacetylase subfamily.

The enzyme catalyses N-acetyl-(2S,6S)-2,6-diaminopimelate + H2O = (2S,6S)-2,6-diaminopimelate + acetate. It participates in amino-acid biosynthesis; L-lysine biosynthesis via DAP pathway; LL-2,6-diaminopimelate from (S)-tetrahydrodipicolinate (acetylase route): step 3/3. Its function is as follows. Catalyzes the conversion of N-acetyl-diaminopimelate to diaminopimelate and acetate. This Streptococcus uberis (strain ATCC BAA-854 / 0140J) protein is N-acetyldiaminopimelate deacetylase.